Here is a 150-residue protein sequence, read N- to C-terminus: Siroheme decarboxylase NirD subunit (150 aa).

The protein belongs to the Ahb/Nir family. Probably forms a complex composed of NirD, NirL, NirG and NirH. All proteins are required for the total conversion of siroheme to didecarboxysiroheme.

The catalysed reaction is siroheme + 2 H(+) = 12,18-didecarboxysiroheme + 2 CO2. The protein operates within porphyrin-containing compound metabolism. Its function is as follows. Involved in heme d1 biosynthesis. Catalyzes the decarboxylation of siroheme into didecarboxysiroheme. In Pseudomonas aeruginosa (strain ATCC 15692 / DSM 22644 / CIP 104116 / JCM 14847 / LMG 12228 / 1C / PRS 101 / PAO1), this protein is Siroheme decarboxylase NirD subunit.